A 321-amino-acid chain; its full sequence is Annexin B10 (321 aa).

4 Annexin repeats span residues 15 to 86 (FDAS…GLMM), 87 to 158 (PPVE…LIVT), 171 to 243 (GQAK…AIVE), and 247 to 319 (SPAA…ALLG).

This sequence belongs to the annexin family.

The chain is Annexin B10 (AnxB10) from Drosophila melanogaster (Fruit fly).